The sequence spans 1293 residues: DNA-directed RNA polymerase subunit beta' (1293 aa).

Cysteine 60, cysteine 62, cysteine 75, and cysteine 78 together coordinate Zn(2+). Residues aspartate 535, aspartate 537, and aspartate 539 each contribute to the Mg(2+) site. Zn(2+) is bound by residues cysteine 877, cysteine 953, cysteine 960, and cysteine 963.

It belongs to the RNA polymerase beta' chain family. In terms of assembly, the RNAP catalytic core consists of 2 alpha, 1 beta, 1 beta' and 1 omega subunit. When a sigma factor is associated with the core the holoenzyme is formed, which can initiate transcription. Mg(2+) is required as a cofactor. It depends on Zn(2+) as a cofactor.

It carries out the reaction RNA(n) + a ribonucleoside 5'-triphosphate = RNA(n+1) + diphosphate. DNA-dependent RNA polymerase catalyzes the transcription of DNA into RNA using the four ribonucleoside triphosphates as substrates. The sequence is that of DNA-directed RNA polymerase subunit beta' from Kineococcus radiotolerans (strain ATCC BAA-149 / DSM 14245 / SRS30216).